The sequence spans 94 residues: Bacterial microcompartment shell protein PduA (94 aa).

The BMC domain occupies 5 to 89 (ALGMVETKGL…PHTDVEKILP (85 aa)).

Belongs to the bacterial microcompartments protein family. Homohexamer with a central pore of about 5.6 Angstroms in diameter. The hexamers pack against each other in arrays. Interacts with the N-terminus of PduP which targets PduP to the BMC. Modeling suggests PduC, PduD, PduE, PduL and PduP interact with a cleft formed by the C-terminal segments of 2 adjacent PduA subunits (on the BMC luminal side) in the hexamer.

It is found in the bacterial microcompartment. The protein operates within polyol metabolism; 1,2-propanediol degradation. Its function is as follows. One of the major shell proteins of the bacterial microcompartment (BMC) dedicated to 1,2-propanediol (1,2-PD) degradation. At least one of PduA or PduJ is required for BMC assembly; it must be encoded as the first gene in the pdu operon. Not required for structural integrity of BMCs, it is required to mitigate propionaldehyde toxicity. Controls diffusion of 1,2-PD into and propionaldehyde out of the BMC shell; residue 40 is particularly important for pore permeability. Overexpression of this protein leads to aberrant filaments that extend the length of the cell, cross the cleavage furrow and impair division. The filaments form nanotubes with a hollow center. The isolated BMC shell component protein ratio for J:A:B':B:K:T:U is approximately 15:10:7:6:1:1:2. Edge residues (particularly Lys-26) are important for function and assembly of the BMC, and influence array formation by hexamers. Interaction with PduA allows encapsulation of at least PduP in BMCs. Probably also targets PduD to the BMC. PduA is probably the hub for binding multiple enzymes to the interior of the BMC; modeling suggests PduC, PduD, PduE, PduG, PduL and PduP are targeted to PduA. The 1,2-PD-specific bacterial microcompartment (BMC) concentrates low levels of 1,2-PD catabolic enzymes, concentrates volatile reaction intermediates thus enhancing pathway flux and keeps the level of toxic, mutagenic propionaldehyde low. This Salmonella typhimurium (strain LT2 / SGSC1412 / ATCC 700720) protein is Bacterial microcompartment shell protein PduA.